A 314-amino-acid chain; its full sequence is Palmitoyl-protein thioesterase 1 (314 aa).

The signal sequence occupies residues 1–25; the sequence is MISICCSRFSCILFLLFLIFSLVLS. Intrachain disulfides connect Cys-53/Cys-54, Cys-104/Cys-136, and Cys-160/Cys-168. The active-site Nucleophile is the Ser-123. Asn-240 is a glycosylation site (N-linked (GlcNAc...) asparagine). Catalysis depends on residues Asp-241 and His-295.

Belongs to the palmitoyl-protein thioesterase family. As to expression, ubiquitously expressed.

The protein resides in the lysosome. The enzyme catalyses S-hexadecanoyl-L-cysteinyl-[protein] + H2O = L-cysteinyl-[protein] + hexadecanoate + H(+). Functionally, cleaves thioester-linked long fatty acyl groups such as palmitate from modified cysteine residues in proteins or peptides. The protein is Palmitoyl-protein thioesterase 1 (Ppt1) of Drosophila melanogaster (Fruit fly).